The sequence spans 491 residues: Cytochrome P450 2F3 (491 aa).

Position 436 (Cys-436) interacts with heme.

Belongs to the cytochrome P450 family. Heme is required as a cofactor. In terms of tissue distribution, lung specific.

Its subcellular location is the endoplasmic reticulum membrane. It localises to the microsome membrane. It catalyses the reaction an organic molecule + reduced [NADPH--hemoprotein reductase] + O2 = an alcohol + oxidized [NADPH--hemoprotein reductase] + H2O + H(+). Bioactivates 3-methylindole (3MI) by dehydrogenation to the putative electrophile 3-methylene-indolenine. Stereoselectively catalyzes the formation of the 1R,2S-oxide from naphthalene. Lack activity with other common P450 substrates including 7-ethoxycoumarin. The protein is Cytochrome P450 2F3 (CYP2F3) of Capra hircus (Goat).